The sequence spans 158 residues: Transcription elongation factor GreA (158 aa).

A coiled-coil region spans residues 5-75; that stretch reads EKLPMLAEGY…DLEDRVSRAQ (71 aa).

Belongs to the GreA/GreB family.

Functionally, necessary for efficient RNA polymerase transcription elongation past template-encoded arresting sites. The arresting sites in DNA have the property of trapping a certain fraction of elongating RNA polymerases that pass through, resulting in locked ternary complexes. Cleavage of the nascent transcript by cleavage factors such as GreA or GreB allows the resumption of elongation from the new 3'terminus. GreA releases sequences of 2 to 3 nucleotides. The chain is Transcription elongation factor GreA from Novosphingobium aromaticivorans (strain ATCC 700278 / DSM 12444 / CCUG 56034 / CIP 105152 / NBRC 16084 / F199).